Reading from the N-terminus, the 295-residue chain is NAD kinase (295 aa).

Asp-72 serves as the catalytic Proton acceptor. Residues 72–73, 146–147, Arg-157, Lys-174, Asp-176, 187–192, and Gln-247 each bind NAD(+); these read DG, ND, and TAYALS.

Belongs to the NAD kinase family. The cofactor is a divalent metal cation.

The protein resides in the cytoplasm. It catalyses the reaction NAD(+) + ATP = ADP + NADP(+) + H(+). In terms of biological role, involved in the regulation of the intracellular balance of NAD and NADP, and is a key enzyme in the biosynthesis of NADP. Catalyzes specifically the phosphorylation on 2'-hydroxyl of the adenosine moiety of NAD to yield NADP. The sequence is that of NAD kinase from Pseudomonas aeruginosa (strain LESB58).